Reading from the N-terminus, the 212-residue chain is ATP phosphoribosyltransferase (212 aa).

Belongs to the ATP phosphoribosyltransferase family. Short subfamily. Heteromultimer composed of HisG and HisZ subunits.

It is found in the cytoplasm. It carries out the reaction 1-(5-phospho-beta-D-ribosyl)-ATP + diphosphate = 5-phospho-alpha-D-ribose 1-diphosphate + ATP. It participates in amino-acid biosynthesis; L-histidine biosynthesis; L-histidine from 5-phospho-alpha-D-ribose 1-diphosphate: step 1/9. Functionally, catalyzes the condensation of ATP and 5-phosphoribose 1-diphosphate to form N'-(5'-phosphoribosyl)-ATP (PR-ATP). Has a crucial role in the pathway because the rate of histidine biosynthesis seems to be controlled primarily by regulation of HisG enzymatic activity. The protein is ATP phosphoribosyltransferase of Prochlorococcus marinus (strain MIT 9301).